A 234-amino-acid polypeptide reads, in one-letter code: Large ribosomal subunit protein uL1 (234 aa).

It belongs to the universal ribosomal protein uL1 family. In terms of assembly, part of the 50S ribosomal subunit.

Binds directly to 23S rRNA. The L1 stalk is quite mobile in the ribosome, and is involved in E site tRNA release. Its function is as follows. Protein L1 is also a translational repressor protein, it controls the translation of the L11 operon by binding to its mRNA. This chain is Large ribosomal subunit protein uL1, found in Anaeromyxobacter dehalogenans (strain 2CP-C).